Here is a 532-residue protein sequence, read N- to C-terminus: Eukaryotic translation initiation factor 4B1 (532 aa).

Disordered regions lie at residues 16-365 (EAER…LEEQ), 401-434 (KKLE…IIRG), and 451-532 (RFRQ…REGW). The segment covering 26–35 (AEATAATADT) has biased composition (low complexity). Composition is skewed to gly residues over residues 105–120 (RLGG…SGGR) and 132–147 (WSGG…YGGG). Positions 167–180 (RADEVDDWGKEKKP) are enriched in basic and acidic residues. The Nuclear localization signal 1 motif lies at 177–184 (EKKPLPSF). Over residues 193–217 (SGDGGGFGGGGSGFGGGGGGGGGGL) the composition is skewed to gly residues. A Nuclear localization signal 2 motif is present at residues 237–244 (SSTFGSSF). The segment covering 237-247 (SSTFGSSFGDS) has biased composition (low complexity). Basic and acidic residues-rich tracts occupy residues 249-263 (QEER…RKVE) and 286-310 (RPRE…EAKK). The span at 315–337 (TSRPTSAHSSRPSSAQSNRSESS) shows a compositional bias: low complexity. Basic and acidic residues-rich tracts occupy residues 355 to 365 (AKPREVLLEEQ), 401 to 416 (KKLE…KESD), 472 to 494 (ERTH…ERPR), and 507 to 520 (NEQR…KERG).

It belongs to the eIF-4 subunit B family. In terms of assembly, homodimer. Nonspherical monomer. mRNA-discriminating component of initiation complexes. In terms of processing, phosphorylated.

The protein localises to the nucleus. In terms of biological role, promotes the eIF4F and eIF4A RNA-dependent ATP-hydrolysis activity with different efficiency depending on mRNAs, thus providing mRNA discrimination during initiation of translation. The sequence is that of Eukaryotic translation initiation factor 4B1 from Arabidopsis thaliana (Mouse-ear cress).